The primary structure comprises 260 residues: HTH-type transcriptional repressor NanR (260 aa).

The 69-residue stretch at 27-95 folds into the HTH gntR-type domain; the sequence is KKLSEMVEEE…NGERARVSRP (69 aa). Residues 55–74 constitute a DNA-binding region (H-T-H motif); the sequence is ERELMAFFNVGRPSVREALA.

It belongs to the NanR family.

Transcriptional repressor that controls expression of the genes required for the catabolism of sialic acids. The sequence is that of HTH-type transcriptional repressor NanR from Citrobacter rodentium (strain ICC168) (Citrobacter freundii biotype 4280).